The sequence spans 232 residues: Small ribosomal subunit protein uS3 (232 aa).

One can recognise a KH type-2 domain in the interval 39–107 (IREILHKELK…DVVINIVEIR (69 aa)).

The protein belongs to the universal ribosomal protein uS3 family. Part of the 30S ribosomal subunit. Forms a tight complex with proteins S10 and S14.

Binds the lower part of the 30S subunit head. Binds mRNA in the 70S ribosome, positioning it for translation. This chain is Small ribosomal subunit protein uS3, found in Rhodopseudomonas palustris (strain BisB18).